Consider the following 200-residue polypeptide: BREX protein BrxB (200 aa).

The protein belongs to the BrxB family.

Its function is as follows. BREX systems (bacteriophage exclusion) provide immunity against bacteriophage. Part of a type 1 BREX system which protects against dsDNA phage. This system allows phage adsorption but prevents phage DNA replication, without degradation of the phage DNA. Methylation of bacterial DNA by PglX guides self/non-self discrimination. When the brxA-brxB-brxC-pglX-pglZ-brxL genes are transformed into a susceptible E.coli strain (BW25113) they confer very high resistance to infection by bacteriophage VR7 and VpaE1, about 100-fold protection against lambda, T5 and T7 and no protection against RNA phage Qbeta, ssDNA phage M13 or dSDNA phage T4 and VR5. Glycosylated phage DNA is not susceptible to BREX. The BREX system does not confer resistance to lysogenic lambda phage, i.e. prophage that are integrated into the chromosomal DNA and then induced to form phage. In Escherichia coli O9:H4 (strain HS), this protein is BREX protein BrxB.